Here is a 973-residue protein sequence, read N- to C-terminus: Isoleucine--tRNA ligase, mitochondrial (973 aa).

Positions 87–97 (PFANGRLHIGH) match the 'HIGH' region motif. Positions 625–629 (KQSKS) match the 'KMSKS' region motif. Lys-628 contacts ATP.

This sequence belongs to the class-I aminoacyl-tRNA synthetase family.

It localises to the cytoplasm. It is found in the mitochondrion matrix. It catalyses the reaction tRNA(Ile) + L-isoleucine + ATP = L-isoleucyl-tRNA(Ile) + AMP + diphosphate. The protein is Isoleucine--tRNA ligase, mitochondrial (ism1) of Schizosaccharomyces pombe (strain 972 / ATCC 24843) (Fission yeast).